The following is a 355-amino-acid chain: Putative inositol monophosphatase 3 (355 aa).

Residues 16 to 36 traverse the membrane as a helical segment; it reads LPATIVAILLTFVLVYFLNFH. Mg(2+)-binding residues include Glu-127, Asp-167, Leu-169, Asp-170, and Asp-292. Glu-127 provides a ligand contact to substrate. Residues 169–172 and Asp-292 each bind substrate; that span reads LDAT.

Belongs to the inositol monophosphatase superfamily. Requires Mg(2+) as cofactor.

Its subcellular location is the membrane. It carries out the reaction a myo-inositol phosphate + H2O = myo-inositol + phosphate. It participates in polyol metabolism; myo-inositol biosynthesis; myo-inositol from D-glucose 6-phosphate: step 2/2. This chain is Putative inositol monophosphatase 3, found in Drosophila melanogaster (Fruit fly).